Consider the following 197-residue polypeptide: MTLDKLIEKLAAKFRIVITKVAVKDHLAYKIEPHFLLPFLKALKESEELRFTVLTDLFGVDFPKKEKRFEVVYNLLSLKLNKNLIIKTHISEKESIPSAMQILSAAYWYELEVYDMYGVNFNGNNDKRRILTDYDFEGHPLRKDFPLTGYTQVKYDKKLEKVTYEPVNLDIEYREFDFSSHWHSPSYVLPGDEKTEE.

This sequence belongs to the complex I 30 kDa subunit family. In terms of assembly, NDH-1 is composed of 14 different subunits. Subunits NuoB, C, D, E, F, and G constitute the peripheral sector of the complex.

It is found in the cell inner membrane. It catalyses the reaction a quinone + NADH + 5 H(+)(in) = a quinol + NAD(+) + 4 H(+)(out). Functionally, NDH-1 shuttles electrons from NADH, via FMN and iron-sulfur (Fe-S) centers, to quinones in the respiratory chain. The immediate electron acceptor for the enzyme in this species is believed to be ubiquinone. Couples the redox reaction to proton translocation (for every two electrons transferred, four hydrogen ions are translocated across the cytoplasmic membrane), and thus conserves the redox energy in a proton gradient. The sequence is that of NADH-quinone oxidoreductase subunit C from Rickettsia prowazekii (strain Madrid E).